The chain runs to 289 residues: Serine/threonine-protein phosphatase Pgam5, mitochondrial (289 aa).

Residues 7 to 23 (FACGTGAGLAAYYLQRL) form a helical membrane-spanning segment.

The protein belongs to the phosphoglycerate mutase family. BPG-dependent PGAM subfamily. Interacts with Pk92B/ASK1.

The protein localises to the mitochondrion outer membrane. It catalyses the reaction O-phospho-L-seryl-[protein] + H2O = L-seryl-[protein] + phosphate. It carries out the reaction O-phospho-L-threonyl-[protein] + H2O = L-threonyl-[protein] + phosphate. Functionally, displays phosphatase activity for serine/threonine residues, and dephosphorylates and activates Pk92B kinase. Has apparently no phosphoglycerate mutase activity. This chain is Serine/threonine-protein phosphatase Pgam5, mitochondrial, found in Drosophila sechellia (Fruit fly).